We begin with the raw amino-acid sequence, 177 residues long: Nucleoside triphosphate/diphosphate phosphatase (177 aa).

Arginine 24 serves as the catalytic Proton donor. Asparagine 88, aspartate 104, aspartate 106, aspartate 108, aspartate 121, and glutamate 124 together coordinate Mg(2+).

This sequence belongs to the Ntdp family. It depends on Mg(2+) as a cofactor.

It carries out the reaction a ribonucleoside 5'-triphosphate + H2O = a ribonucleoside 5'-diphosphate + phosphate + H(+). The catalysed reaction is a ribonucleoside 5'-diphosphate + H2O = a ribonucleoside 5'-phosphate + phosphate + H(+). Has nucleoside phosphatase activity towards nucleoside triphosphates and nucleoside diphosphates. This is Nucleoside triphosphate/diphosphate phosphatase from Geobacillus sp. (strain WCH70).